A 1102-amino-acid chain; its full sequence is Putative ISWI chromatin-remodeling complex subunit YPL216W (1102 aa).

Residues 23 to 131 form the WAC domain; that stretch reads ETPWVIKESS…DTVCLKTIQK (109 aa). Positions 271–301 are disordered; sequence ELYTPLTIPPESDVEPADWKETSETSETSET. The DDT domain occupies 375–435; it reads QFPTERLLVV…FLKTYNSKGS (61 aa). Residues 673–743 adopt a coiled-coil conformation; it reads CNGIRLKLDS…EDIAFLEAKL (71 aa).

The protein resides in the nucleus. May be required for the activity of an ISWI chromatin-remodeling complex. This chain is Putative ISWI chromatin-remodeling complex subunit YPL216W, found in Saccharomyces cerevisiae (strain ATCC 204508 / S288c) (Baker's yeast).